A 211-amino-acid polypeptide reads, in one-letter code: Probable septum site-determining protein MinC (211 aa).

Belongs to the MinC family. In terms of assembly, interacts with MinD and FtsZ.

Functionally, cell division inhibitor that blocks the formation of polar Z ring septums. Rapidly oscillates between the poles of the cell to destabilize FtsZ filaments that have formed before they mature into polar Z rings. Prevents FtsZ polymerization. The protein is Probable septum site-determining protein MinC of Clostridium perfringens (strain 13 / Type A).